Consider the following 442-residue polypeptide: Probable glycine dehydrogenase (decarboxylating) subunit 1 (442 aa).

This sequence belongs to the GcvP family. N-terminal subunit subfamily. In terms of assembly, the glycine cleavage system is composed of four proteins: P, T, L and H. In this organism, the P 'protein' is a heterodimer of two subunits.

It catalyses the reaction N(6)-[(R)-lipoyl]-L-lysyl-[glycine-cleavage complex H protein] + glycine + H(+) = N(6)-[(R)-S(8)-aminomethyldihydrolipoyl]-L-lysyl-[glycine-cleavage complex H protein] + CO2. Functionally, the glycine cleavage system catalyzes the degradation of glycine. The P protein binds the alpha-amino group of glycine through its pyridoxal phosphate cofactor; CO(2) is released and the remaining methylamine moiety is then transferred to the lipoamide cofactor of the H protein. The chain is Probable glycine dehydrogenase (decarboxylating) subunit 1 from Geotalea daltonii (strain DSM 22248 / JCM 15807 / FRC-32) (Geobacter daltonii).